Here is a 488-residue protein sequence, read N- to C-terminus: Probable (S)-N-methylcoclaurine 3'-hydroxylase isozyme 2 (488 aa).

Residues 2 to 21 (EVLSIAIVSFSFLLFLFFIL) traverse the membrane as a helical segment. Heme is bound at residue cysteine 427.

It belongs to the cytochrome P450 family. It depends on heme as a cofactor. Expressed at low levels in roots.

The protein localises to the endoplasmic reticulum membrane. Its subcellular location is the microsome membrane. The enzyme catalyses (S)-N-methylcoclaurine + reduced [NADPH--hemoprotein reductase] + O2 = (S)-3'-hydroxy-N-methylcoclaurine + oxidized [NADPH--hemoprotein reductase] + H2O + H(+). It functions in the pathway alkaloid biosynthesis; (S)-reticuline biosynthesis; (S)-reticuline from (S)-norcoclaurine: step 3/4. In terms of biological role, 3'-hydroxylation of (S)-N-methylcoclaurine. This Coptis japonica (Japanese goldthread) protein is Probable (S)-N-methylcoclaurine 3'-hydroxylase isozyme 2 (CYP80B2).